Here is a 140-residue protein sequence, read N- to C-terminus: MGSCVSKGKGDDDSVHNVEFSGGNVHLITTKESWDDKLAEADRDGKIVVANFSATWCGPCKIVAPFFIELSEKHSSLMFLLVDVDELSDFSSSWDIKATPTFFFLKNGQQIGKLVGANKPELQKKVTSIIDSVPESPQRP.

Residue G2 is the site of N-myristoyl glycine attachment. C4 carries the S-palmitoyl cysteine lipid modification. A Phosphoserine modification is found at S14. Residues 25 to 129 (VHLITTKESW…PELQKKVTSI (105 aa)) enclose the Thioredoxin domain. Active-site nucleophile residues include C57 and C60. C57 and C60 are disulfide-bonded. S136 is modified (phosphoserine).

The protein belongs to the thioredoxin family. Plant H-type subfamily. Ubiquitous.

Its subcellular location is the cell membrane. In terms of biological role, probable thiol-disulfide oxidoreductase that may play a role in intercellular communication due to its ability to move from cell to cell. The protein is Thioredoxin H9 (TRX9) of Arabidopsis thaliana (Mouse-ear cress).